Here is a 476-residue protein sequence, read N- to C-terminus: MEEKLNDLKEQGIDWAFANGLIMIKKPTEEEAKNNVVNVTHVPFSLYPSKMNKKLFNEACKLAEDYNLLVHNISKDYDFLQNTLKDVFDDFTQMLLNIQRKVVKEGIKQKISLGIFRSDYMFHNKIEGEEERIYQVELNTISSSLAVVSNRVFNLHKYLIGRNDLNDNGYDLLNHPTNQSDKEISDSIALAHKLYNKEKSSVVLMIIQEGERNIYDQKGLEFQLWSNHSIKLIRRTMKEINQCAKLDEENGSVLIVDGMEISVAYYRAGYTPNDYTSSGGDEWKARLLIERSLAIKCPTIAHHLVGVKKIQQVLAQPGVLEKFINNDKESLQRVKRSFTGLYSLSKEDIDMSVVKEAIESPQNYVMKPQREGGGNNIYNDQVAIALKSMSSEELSSYILMDKIMSKSFKTHVVRDRQLLEIEGLYELGIYSVFISNGDDDIVLNKQAGILLRTKTANSDEVGVAAGFGLLDSPILE.

Residue arginine 117 participates in substrate binding. Glutamate 137 is an ATP binding site. Mg(2+)-binding residues include glutamate 137 and asparagine 139. Residues 141–144 (ISSS), 211–213 (ERN), glutamine 217, and 267–270 (RAGY) contribute to the substrate site. Residues lysine 308, 367–376 (KPQREGGGNN), tyrosine 378, 400–403 (MDKI), and glutamate 426 each bind ATP. Position 371 (glutamate 371) interacts with Mg(2+). Residue arginine 452 participates in substrate binding. The ATP site is built by lysine 454 and glutamate 460. Position 463 to 464 (463 to 464 (VA)) interacts with substrate.

Belongs to the eukaryotic GSH synthase family. In terms of assembly, homodimer. It depends on Mg(2+) as a cofactor.

It carries out the reaction gamma-L-glutamyl-L-cysteine + glycine + ATP = glutathione + ADP + phosphate + H(+). Its pathway is sulfur metabolism; glutathione biosynthesis; glutathione from L-cysteine and L-glutamate: step 2/2. This chain is Glutathione synthetase (gshB), found in Dictyostelium discoideum (Social amoeba).